Here is a 131-residue protein sequence, read N- to C-terminus: Profilin-2 (131 aa).

Residues C13 and C115 are joined by a disulfide bond. The Involved in PIP2 interaction signature appears at A81–T97. Position 111 is a phosphothreonine (T111).

Belongs to the profilin family. In terms of assembly, occurs in many kinds of cells as a complex with monomeric actin in a 1:1 ratio. Post-translationally, phosphorylated by MAP kinases. As to expression, pollen specific.

Its subcellular location is the cytoplasm. It localises to the cytoskeleton. Its function is as follows. Binds to actin and affects the structure of the cytoskeleton. At high concentrations, profilin prevents the polymerization of actin, whereas it enhances it at low concentrations. By binding to PIP2, it inhibits the formation of IP3 and DG. This is Profilin-2 (PRO2) from Zea mays (Maize).